The chain runs to 128 residues: Fluoride-specific ion channel FluC (128 aa).

The next 4 membrane-spanning stretches (helical) occupy residues 6–26 (LVAL…GLVL), 36–56 (LPTF…AGLA), 68–88 (VLLF…GLET), and 99–119 (IAAA…WLGF). Positions 76 and 79 each coordinate Na(+).

Belongs to the fluoride channel Fluc/FEX (TC 1.A.43) family.

The protein localises to the cell inner membrane. It catalyses the reaction fluoride(in) = fluoride(out). Na(+) is not transported, but it plays an essential structural role and its presence is essential for fluoride channel function. Its function is as follows. Fluoride-specific ion channel. Important for reducing fluoride concentration in the cell, thus reducing its toxicity. The protein is Fluoride-specific ion channel FluC of Methylobacillus flagellatus (strain ATCC 51484 / DSM 6875 / VKM B-1610 / KT).